The following is a 203-amino-acid chain: Na(+)-translocating NADH-quinone reductase subunit E (203 aa).

6 helical membrane-spanning segments follow: residues 12 to 32, 36 to 56, 82 to 102, 115 to 135, 145 to 165, and 181 to 201; these read AVFV…FLAL, MEAA…TVPV, FLGL…LEMV, GVFL…LFMV, LVYG…LAGI, and LGIT…FSGI.

Belongs to the NqrDE/RnfAE family. As to quaternary structure, composed of six subunits; NqrA, NqrB, NqrC, NqrD, NqrE and NqrF.

The protein resides in the cell inner membrane. The catalysed reaction is a ubiquinone + n Na(+)(in) + NADH + H(+) = a ubiquinol + n Na(+)(out) + NAD(+). Its function is as follows. NQR complex catalyzes the reduction of ubiquinone-1 to ubiquinol by two successive reactions, coupled with the transport of Na(+) ions from the cytoplasm to the periplasm. NqrA to NqrE are probably involved in the second step, the conversion of ubisemiquinone to ubiquinol. The polypeptide is Na(+)-translocating NADH-quinone reductase subunit E (Hahella chejuensis (strain KCTC 2396)).